The primary structure comprises 314 residues: Protein phosphatase PTC7 homolog fig (314 aa).

The 267-residue stretch at 43–309 (PYLVTVVQGR…DDITLILSSV (267 aa)) folds into the PPM-type phosphatase domain. The Mn(2+) site is built by D87, G88, and D232.

It belongs to the PP2C family. The cofactor is Mg(2+). Mn(2+) serves as cofactor.

The catalysed reaction is O-phospho-L-seryl-[protein] + H2O = L-seryl-[protein] + phosphate. It carries out the reaction O-phospho-L-threonyl-[protein] + H2O = L-threonyl-[protein] + phosphate. The sequence is that of Protein phosphatase PTC7 homolog fig from Drosophila sechellia (Fruit fly).